A 132-amino-acid polypeptide reads, in one-letter code: Vacuolar protein sorting-associated protein 55 homolog (132 aa).

4 helical membrane-spanning segments follow: residues V7–L27, T32–A52, L68–A88, and C98–L118.

Belongs to the OB-RGRP/VPS55 family.

The protein localises to the endosome membrane. Involved in endosomal protein transport. The sequence is that of Vacuolar protein sorting-associated protein 55 homolog from Caenorhabditis elegans.